A 127-amino-acid chain; its full sequence is Glycine cleavage system H protein (127 aa).

One can recognise a Lipoyl-binding domain in the interval 22 to 104 (EVVIGITHFA…YEGAWMVKVE (83 aa)). Residue Lys-63 is modified to N6-lipoyllysine.

This sequence belongs to the GcvH family. The glycine cleavage system is composed of four proteins: P, T, L and H. It depends on (R)-lipoate as a cofactor.

Functionally, the glycine cleavage system catalyzes the degradation of glycine. The H protein shuttles the methylamine group of glycine from the P protein to the T protein. In terms of biological role, is also involved in protein lipoylation via its role as an octanoyl/lipoyl carrier protein intermediate. This is Glycine cleavage system H protein from Bacillus cereus (strain B4264).